The following is a 342-amino-acid chain: MTGELWLTLVDTADIVGFSMTFCVNIVLLFLLKNRGKNLGTYKHLMAFFSVFSIFYAIIESILRPIMHIENATFFLISRKRFNYSTRLGKINSAFYCACFATSFVVSGVHFVYRFFASCKPHLLRSFNMPYLLLWPLGCSIPVMMWASVSYFLYPDTAFTEAAVTNVLNTHYHSIKKDNVSYIAYVYYQYDENGVRYVYLKNLLGCFVHYFVMSATFVVMFICGYLTWKTMRKHKTASDRTRQLQKQLFKALVLQTLIPTIFMYAPTGVMFIAPFFSINLNANANFIVFCSFLYPGLDPLILILIIRDFRQTVFKFFCLRKKNSVDESRSTTRANMSQVATH.

Residues methionine 1 to aspartate 11 lie on the Extracellular side of the membrane. Residues threonine 12–leucine 32 traverse the membrane as a helical segment. Topologically, residues lysine 33–asparagine 38 are cytoplasmic. A helical membrane pass occupies residues leucine 39–isoleucine 59. Over glutamate 60–asparagine 92 the chain is Extracellular. Residues asparagine 71 and asparagine 83 are each glycosylated (N-linked (GlcNAc...) asparagine). The chain crosses the membrane as a helical span at residues serine 93–tyrosine 113. Topologically, residues arginine 114–tyrosine 131 are cytoplasmic. Residues leucine 132–phenylalanine 152 form a helical membrane-spanning segment. Over leucine 153–asparagine 202 the chain is Extracellular. The N-linked (GlcNAc...) asparagine glycan is linked to asparagine 179. The chain crosses the membrane as a helical span at residues leucine 203–cysteine 223. At glycine 224–leucine 257 the chain is on the cytoplasmic side. A helical membrane pass occupies residues isoleucine 258–isoleucine 278. Over asparagine 279–asparagine 285 the chain is Extracellular. The helical transmembrane segment at phenylalanine 286–isoleucine 306 threads the bilayer. Topologically, residues arginine 307 to histidine 342 are cytoplasmic.

This sequence belongs to the nematode receptor-like protein str family. In terms of assembly, interacts with odr-4.

The protein localises to the cell projection. It localises to the cilium membrane. Functionally, an odorant receptor which affects chemotaxis to the volatile odorant diacetyl. Specifies AWA neuronal cell fate via the odr-7 pathway. The polypeptide is Serpentine receptor class r-10 (Caenorhabditis briggsae).